Consider the following 147-residue polypeptide: D-aminoacyl-tRNA deacylase (147 aa).

A Gly-cisPro motif, important for rejection of L-amino acids motif is present at residues 136 to 137; the sequence is GP.

The protein belongs to the DTD family. In terms of assembly, homodimer.

It is found in the cytoplasm. The catalysed reaction is glycyl-tRNA(Ala) + H2O = tRNA(Ala) + glycine + H(+). It carries out the reaction a D-aminoacyl-tRNA + H2O = a tRNA + a D-alpha-amino acid + H(+). An aminoacyl-tRNA editing enzyme that deacylates mischarged D-aminoacyl-tRNAs. Also deacylates mischarged glycyl-tRNA(Ala), protecting cells against glycine mischarging by AlaRS. Acts via tRNA-based rather than protein-based catalysis; rejects L-amino acids rather than detecting D-amino acids in the active site. By recycling D-aminoacyl-tRNA to D-amino acids and free tRNA molecules, this enzyme counteracts the toxicity associated with the formation of D-aminoacyl-tRNA entities in vivo and helps enforce protein L-homochirality. The polypeptide is D-aminoacyl-tRNA deacylase (Streptococcus pyogenes serotype M1).